A 1527-amino-acid polypeptide reads, in one-letter code: Lysophospholipase nte1 (1527 aa).

Over 1–73 (MADSGASVPS…SPPTPTTMVG (73 aa)) the chain is Cytoplasmic. Residues 74–94 (WIGWVFSLVFQTIPSVLYWVI) traverse the membrane as a helical segment. Residues 95 to 116 (TFSTITLPTWLFTLFSMSLTFT) lie on the Lumenal side of the membrane. A helical membrane pass occupies residues 117-137 (MNFTTLLLIVLGLVSTVSWFI). At 138–1527 (RYRFLNMYSR…RTLAPRRASI (1390 aa)) the chain is on the cytoplasmic side. Residues 299–310 (GSSSSMSSVQPS) are compositionally biased toward low complexity. 3 disordered regions span residues 299–387 (GSSS…RRKS), 567–596 (DQFA…QRKD), and 765–785 (ATSR…KKPS). Positions 364–377 (RASSYHPNGQSTAS) are enriched in polar residues. A nucleoside 3',5'-cyclic phosphate is bound by residues 682 to 809 (GGTS…SYRS) and 846 to 966 (RLTG…IAQR). The 165-residue stretch at 1224–1388 (LVLGGGGARG…IDNLTVAHMK (165 aa)) folds into the PNPLA domain. Positions 1228 to 1233 (GGGARG) match the GXGXXG motif. A GXSXG motif is present at residues 1255–1259 (GTSIG). The active-site Nucleophile is S1257. The active-site Proton acceptor is D1375. Residues 1375-1377 (DGG) carry the DGA/G motif. The tract at residues 1504-1527 (LPLPEENEEKKKLQRTLAPRRASI) is disordered.

The protein belongs to the NTE family.

It localises to the endoplasmic reticulum membrane. It carries out the reaction a 1-acyl-sn-glycero-3-phosphocholine + H2O = sn-glycerol 3-phosphocholine + a fatty acid + H(+). Inhibited by organophosphorus esters. Intracellular phospholipase B that catalyzes the double deacylation of phosphatidylcholine (PC) to glycerophosphocholine (GroPCho). Plays an important role in membrane lipid homeostasis. Responsible for the rapid PC turnover in response to inositol, elevated temperatures, or when choline is present in the growth medium. The chain is Lysophospholipase nte1 (nte1) from Emericella nidulans (strain FGSC A4 / ATCC 38163 / CBS 112.46 / NRRL 194 / M139) (Aspergillus nidulans).